The sequence spans 208 residues: Small ribosomal subunit protein uS2 (208 aa).

The interval 189 to 208 (KPDQDLPVPPEEFETRLVQT) is disordered.

The protein belongs to the universal ribosomal protein uS2 family.

In Pyrobaculum arsenaticum (strain DSM 13514 / JCM 11321 / PZ6), this protein is Small ribosomal subunit protein uS2.